We begin with the raw amino-acid sequence, 219 residues long: Protein matrimony (219 aa).

Basic residues predominate over residues 74–99 (PPAKAHPHPHQHQHHHHHHKHIHRTQ). Residues 74–104 (PPAKAHPHPHQHQHHHHHHKHIHRTQLKPPP) form a disordered region. Residues 159 to 219 (NHAANVEQIL…NRIMDVLQTL (61 aa)) enclose the SAM domain.

Interacts with polo. Interacts with cort. In terms of processing, probably ubiquitinated: degraded during the oocyte-to-embryo transition by the anaphase promoting complex/cyclosome (APC/C) containing cort protein.

It is found in the nucleus. The protein localises to the chromosome. Functionally, polo kinase inhibitor required to maintain G2 arrest in the meiotic cell cycle in females. Holds heterochromatically paired homologs together from the end of pachytene until metaphase I. Haploinsufficient locus for homologous achiasmate segregation and may be required for the maintenance of heterochromatic pairings. The chain is Protein matrimony (mtrm) from Drosophila yakuba (Fruit fly).